Here is a 160-residue protein sequence, read N- to C-terminus: Putative 4-hydroxy-4-methyl-2-oxoglutarate aldolase (160 aa).

Substrate is bound by residues 75-78 and Arg97; that span reads GDLI. Asp98 serves as a coordination point for a divalent metal cation.

It belongs to the class II aldolase/RraA-like family. As to quaternary structure, homotrimer. A divalent metal cation serves as cofactor.

It catalyses the reaction 4-hydroxy-4-methyl-2-oxoglutarate = 2 pyruvate. It carries out the reaction oxaloacetate + H(+) = pyruvate + CO2. Functionally, catalyzes the aldol cleavage of 4-hydroxy-4-methyl-2-oxoglutarate (HMG) into 2 molecules of pyruvate. Also contains a secondary oxaloacetate (OAA) decarboxylase activity due to the common pyruvate enolate transition state formed following C-C bond cleavage in the retro-aldol and decarboxylation reactions. This chain is Putative 4-hydroxy-4-methyl-2-oxoglutarate aldolase, found in Rhodospirillum centenum (strain ATCC 51521 / SW).